A 312-amino-acid polypeptide reads, in one-letter code: Pyrimidine-specific ribonucleoside hydrolase RihA (312 aa).

Histidine 240 is a catalytic residue.

Belongs to the IUNH family. RihA subfamily.

Functionally, hydrolyzes cytidine or uridine to ribose and cytosine or uracil, respectively. The protein is Pyrimidine-specific ribonucleoside hydrolase RihA of Citrobacter koseri (strain ATCC BAA-895 / CDC 4225-83 / SGSC4696).